Consider the following 102-residue polypeptide: Small ribosomal subunit protein uS10 (102 aa).

It belongs to the universal ribosomal protein uS10 family. As to quaternary structure, part of the 30S ribosomal subunit.

Involved in the binding of tRNA to the ribosomes. The polypeptide is Small ribosomal subunit protein uS10 (rpsJ) (Bacillus subtilis (strain 168)).